The following is a 246-amino-acid chain: 2,3-bisphosphoglycerate-dependent phosphoglycerate mutase (246 aa).

Substrate contacts are provided by residues Arg-9 to Asn-16, Thr-22 to Gly-23, Arg-61, Glu-88 to Tyr-91, Lys-99, Arg-115 to Arg-116, and Gly-181 to Asn-182. His-10 acts as the Tele-phosphohistidine intermediate in catalysis. Glu-88 functions as the Proton donor/acceptor in the catalytic mechanism.

It belongs to the phosphoglycerate mutase family. BPG-dependent PGAM subfamily.

It carries out the reaction (2R)-2-phosphoglycerate = (2R)-3-phosphoglycerate. The protein operates within carbohydrate degradation; glycolysis; pyruvate from D-glyceraldehyde 3-phosphate: step 3/5. Its function is as follows. Catalyzes the interconversion of 2-phosphoglycerate and 3-phosphoglycerate. The chain is 2,3-bisphosphoglycerate-dependent phosphoglycerate mutase from Bifidobacterium longum (strain DJO10A).